We begin with the raw amino-acid sequence, 1216 residues long: DNA-directed RNA polymerase subunit beta (1216 aa).

The disordered stretch occupies residues 1185-1216; that stretch reads EEKQELPSQEYESLNLDQELKTASENVSESEF. Positions 1190-1216 are enriched in polar residues; it reads LPSQEYESLNLDQELKTASENVSESEF.

It belongs to the RNA polymerase beta chain family. In terms of assembly, the RNAP catalytic core consists of 2 alpha, 1 beta, 1 beta' and 1 omega subunit. When a sigma factor is associated with the core the holoenzyme is formed, which can initiate transcription.

The catalysed reaction is RNA(n) + a ribonucleoside 5'-triphosphate = RNA(n+1) + diphosphate. In terms of biological role, DNA-dependent RNA polymerase catalyzes the transcription of DNA into RNA using the four ribonucleoside triphosphates as substrates. The chain is DNA-directed RNA polymerase subunit beta from Mycoplasmopsis pulmonis (strain UAB CTIP) (Mycoplasma pulmonis).